Here is a 150-residue protein sequence, read N- to C-terminus: Ribonuclease H (150 aa).

The region spanning 1-141 (MRPVIIHTDG…ADQLARDGLT (141 aa)) is the RNase H type-1 domain. 4 residues coordinate Mg(2+): Asp9, Glu47, Asp69, and Asp133.

This sequence belongs to the RNase H family. Monomer. Mg(2+) is required as a cofactor.

The protein localises to the cytoplasm. It catalyses the reaction Endonucleolytic cleavage to 5'-phosphomonoester.. Its function is as follows. Endonuclease that specifically degrades the RNA of RNA-DNA hybrids. This chain is Ribonuclease H, found in Rhodopseudomonas palustris (strain BisB5).